A 214-amino-acid polypeptide reads, in one-letter code: Adenylate kinase (214 aa).

10–15 serves as a coordination point for ATP; it reads GAGKGT. The NMP stretch occupies residues 30–59; that stretch reads STGDILRAAVKDMTPMGGKAKSFMDAGALV. AMP-binding positions include threonine 31, arginine 36, 57 to 59, 85 to 88, and glutamine 92; these read ALV and GFPR. Residues 126-163 form an LID region; that stretch reads GRRTCRNCGKGFHVSFDPPKSSGICDECSGELYQRDDD. Arginine 127 is an ATP binding site. Positions 130, 133, 150, and 153 each coordinate Zn(2+). AMP contacts are provided by arginine 160 and arginine 171. Glycine 199 contacts ATP.

This sequence belongs to the adenylate kinase family. Monomer.

The protein resides in the cytoplasm. The enzyme catalyses AMP + ATP = 2 ADP. The protein operates within purine metabolism; AMP biosynthesis via salvage pathway; AMP from ADP: step 1/1. Functionally, catalyzes the reversible transfer of the terminal phosphate group between ATP and AMP. Plays an important role in cellular energy homeostasis and in adenine nucleotide metabolism. This is Adenylate kinase from Geotalea daltonii (strain DSM 22248 / JCM 15807 / FRC-32) (Geobacter daltonii).